The sequence spans 279 residues: Putative pyruvate, phosphate dikinase regulatory protein (279 aa).

Residue 152–159 (GVSRTSKS) coordinates ADP.

It belongs to the pyruvate, phosphate/water dikinase regulatory protein family. PDRP subfamily.

It catalyses the reaction N(tele)-phospho-L-histidyl/L-threonyl-[pyruvate, phosphate dikinase] + ADP = N(tele)-phospho-L-histidyl/O-phospho-L-threonyl-[pyruvate, phosphate dikinase] + AMP + H(+). The catalysed reaction is N(tele)-phospho-L-histidyl/O-phospho-L-threonyl-[pyruvate, phosphate dikinase] + phosphate + H(+) = N(tele)-phospho-L-histidyl/L-threonyl-[pyruvate, phosphate dikinase] + diphosphate. Bifunctional serine/threonine kinase and phosphorylase involved in the regulation of the pyruvate, phosphate dikinase (PPDK) by catalyzing its phosphorylation/dephosphorylation. In Anaplasma marginale (strain St. Maries), this protein is Putative pyruvate, phosphate dikinase regulatory protein.